A 236-amino-acid chain; its full sequence is NAD(P)H-hydrate epimerase (236 aa).

The YjeF N-terminal domain maps to 11 to 217 (AAALDQELMS…AIASKYGFEV (207 aa)). 61-65 (NNGGD) is a binding site for (6S)-NADPHX. K(+)-binding residues include Asn62 and Asp123. Residues 127-133 (GFSFSGE) and Asp156 contribute to the (6S)-NADPHX site. A K(+)-binding site is contributed by Ser159.

The protein belongs to the NnrE/AIBP family. The cofactor is K(+).

The protein resides in the cytoplasm. The protein localises to the mitochondrion. The catalysed reaction is (6R)-NADHX = (6S)-NADHX. It catalyses the reaction (6R)-NADPHX = (6S)-NADPHX. Its function is as follows. Catalyzes the epimerization of the S- and R-forms of NAD(P)HX, a damaged form of NAD(P)H that is a result of enzymatic or heat-dependent hydration. This is a prerequisite for the S-specific NAD(P)H-hydrate dehydratase to allow the repair of both epimers of NAD(P)HX. The protein is NAD(P)H-hydrate epimerase of Fusarium vanettenii (strain ATCC MYA-4622 / CBS 123669 / FGSC 9596 / NRRL 45880 / 77-13-4) (Fusarium solani subsp. pisi).